A 314-amino-acid chain; its full sequence is 4-hydroxy-3-methylbut-2-enyl diphosphate reductase (314 aa).

Cys-12 contacts [4Fe-4S] cluster. Residues His-41 and His-74 each contribute to the (2E)-4-hydroxy-3-methylbut-2-enyl diphosphate site. Residues His-41 and His-74 each coordinate dimethylallyl diphosphate. Isopentenyl diphosphate contacts are provided by His-41 and His-74. Position 96 (Cys-96) interacts with [4Fe-4S] cluster. His-124 is a binding site for (2E)-4-hydroxy-3-methylbut-2-enyl diphosphate. A dimethylallyl diphosphate-binding site is contributed by His-124. His-124 is a binding site for isopentenyl diphosphate. Glu-126 (proton donor) is an active-site residue. Thr-168 lines the (2E)-4-hydroxy-3-methylbut-2-enyl diphosphate pocket. Cys-198 lines the [4Fe-4S] cluster pocket. 4 residues coordinate (2E)-4-hydroxy-3-methylbut-2-enyl diphosphate: Ser-226, Ser-227, Asn-228, and Ser-270. Residues Ser-226, Ser-227, Asn-228, and Ser-270 each contribute to the dimethylallyl diphosphate site. Residues Ser-226, Ser-227, Asn-228, and Ser-270 each coordinate isopentenyl diphosphate.

It belongs to the IspH family. Requires [4Fe-4S] cluster as cofactor.

The enzyme catalyses isopentenyl diphosphate + 2 oxidized [2Fe-2S]-[ferredoxin] + H2O = (2E)-4-hydroxy-3-methylbut-2-enyl diphosphate + 2 reduced [2Fe-2S]-[ferredoxin] + 2 H(+). It catalyses the reaction dimethylallyl diphosphate + 2 oxidized [2Fe-2S]-[ferredoxin] + H2O = (2E)-4-hydroxy-3-methylbut-2-enyl diphosphate + 2 reduced [2Fe-2S]-[ferredoxin] + 2 H(+). Its pathway is isoprenoid biosynthesis; dimethylallyl diphosphate biosynthesis; dimethylallyl diphosphate from (2E)-4-hydroxy-3-methylbutenyl diphosphate: step 1/1. The protein operates within isoprenoid biosynthesis; isopentenyl diphosphate biosynthesis via DXP pathway; isopentenyl diphosphate from 1-deoxy-D-xylulose 5-phosphate: step 6/6. In terms of biological role, catalyzes the conversion of 1-hydroxy-2-methyl-2-(E)-butenyl 4-diphosphate (HMBPP) into a mixture of isopentenyl diphosphate (IPP) and dimethylallyl diphosphate (DMAPP). Acts in the terminal step of the DOXP/MEP pathway for isoprenoid precursor biosynthesis. This chain is 4-hydroxy-3-methylbut-2-enyl diphosphate reductase, found in Pseudomonas aeruginosa (strain ATCC 15692 / DSM 22644 / CIP 104116 / JCM 14847 / LMG 12228 / 1C / PRS 101 / PAO1).